Reading from the N-terminus, the 171-residue chain is MEPSPALAWLLLLSLVADCLKAAQSRDFTVKDIIYLHPSTTPYPGGFKCFTCEKAADNYECNRWAPDIYCPRDTRYCYTQHTMEVTGNSISVTKRCVPLEECLSTGCRDSEHEGYKICTSCCEGNICNLPLPRNDTDATFATTSPINQTNGHPHCVSVIVSCLWVWLGLTL.

The first 25 residues, 1 to 25, serve as a signal peptide directing secretion; it reads MEPSPALAWLLLLSLVADCLKAAQS. Residues 47 to 141 form the UPAR/Ly6 domain; it reads FKCFTCEKAA…PRNDTDATFA (95 aa). Intrachain disulfides connect cysteine 49/cysteine 77, cysteine 52/cysteine 61, cysteine 70/cysteine 96, cysteine 102/cysteine 121, cysteine 107/cysteine 118, and cysteine 122/cysteine 127. The NxI motif motif lies at 88 to 90; that stretch reads NSI. N-linked (GlcNAc...) asparagine glycans are attached at residues asparagine 134 and asparagine 147. A lipid anchor (GPI-anchor amidated asparagine) is attached at asparagine 147. A propeptide spans 148–171 (removed in mature form); the sequence is QTNGHPHCVSVIVSCLWVWLGLTL.

In terms of assembly, interacts with nicotinic acetylcholine receptors (nAChRs) including CHRNA3, CHRNA4, CHRNA5, CHRNA6, CHRNA7, CHRNB2 and CHRNB4. Interacts (via NxI motif) with LRP6. Expressed at high levels in the cortex and cerebellum of the brain, at moderate levels in the lung, kidney, and liver, and at low levels in the heart and prostate (at protein level). Expressed in neurons (at protein level).

The protein resides in the secreted. It localises to the cytoplasm. Its subcellular location is the cell membrane. It is found in the synapse. The protein localises to the synaptosome. The protein resides in the membrane raft. It localises to the cell projection. Its subcellular location is the dendrite. It is found in the perikaryon. Functionally, acts as a modulator of nicotinic acetylcholine receptors (nAChRs) function in the brain. Inhibits nicotine-induced Ca(2+) influx through nAChRs. In vitro, specifically inhibits alpha-3:beta-4 and alpha-7 nAChR currents in an allosteric manner. Acts as a positive regulator of Wnt/beta-catenin signaling. The polypeptide is Ly6/PLAUR domain-containing protein 6 (Lypd6) (Rattus norvegicus (Rat)).